We begin with the raw amino-acid sequence, 440 residues long: Chitinase-like protein Idgf2 (440 aa).

A signal peptide spans 1 to 20 (MKAWIWFTFVACLFAASTEA). Residues 22–440 (SNLVCYYDSS…PILRAIKYRL (419 aa)) form the GH18 domain. Cysteine 26 and cysteine 53 are disulfide-bonded. The N-linked (GlcNAc...) asparagine glycan is linked to asparagine 220. A disulfide bridge links cysteine 342 with cysteine 425.

Belongs to the glycosyl hydrolase 18 family. IDGF subfamily. Glycosylated. As to expression, primarily expressed in yolk cells and fat body. In larvae, it is expressed in the imaginal ring and weakly expressed in imaginal disks. More strongly expressed than Idgf1 and Idgf3.

Its subcellular location is the secreted. Functionally, cooperates with insulin-like peptides to stimulate the proliferation, polarization and motility of imaginal disk cells. May act by stabilizing the binding of insulin-like peptides to its receptor through a simultaneous interaction with both molecules to form a multiprotein signaling complex. The protein is Chitinase-like protein Idgf2 (Idgf2) of Drosophila melanogaster (Fruit fly).